Reading from the N-terminus, the 472-residue chain is FAD-dependent monooxygenase ltmM (472 aa).

Residues 7–27 traverse the membrane as a helical segment; that stretch reads VIIVGGSVAGLSLAHCLEKIG. The FAD site is built by glutamate 34, glycine 48, and arginine 107. Asparagine 186 carries N-linked (GlcNAc...) asparagine glycosylation. Aspartate 306 and alanine 319 together coordinate FAD. Residues 450-470 form a helical membrane-spanning segment; sequence IVYALYLVAAAAFILYCLSSL.

It belongs to the paxM FAD-dependent monooxygenase family. FAD is required as a cofactor.

Its subcellular location is the membrane. It functions in the pathway secondary metabolite biosynthesis. FAD-dependent monooxygenase; part of the gene cluster that mediates the biosynthesis of lolitrems, indole-diterpene mycotoxins that are potent tremorgens in mammals, and are synthesized by clavicipitaceous fungal endophytes in association with their grass hosts. The geranylgeranyl diphosphate (GGPP) synthase ltmG is proposed to catalyze the first step in lolitremB biosynthesis. LtmG catalyzes a series of iterative condensations of isopentenyl diphosphate (IPP) with dimethylallyl diphosphate (DMAPP), geranyl diphosphate (GPP), and farnesyl diphosphate (FPP), to form GGPP. GGPP then condenses with indole-3-glycerol phosphate to form 3-geranylgeranylindole, an acyclic intermediate, to be incorporated into paxilline. Either ltmG or ltmC could be responsible for this step, as both are putative prenyl transferases. The FAD-dependent monooxygenase ltmM then catalyzes the epoxidation of the two terminal alkenes of the geranylgeranyl moiety, which is subsequently cyclized by ltmB, to paspaline. The cytochrome P450 monooxygenases ltmQ and ltmP can sequentially oxidize paspaline to terpendole E and terpendole F. Alternatively, ltmP converts paspaline to an intermediate which is oxidized by ltmQ to terpendole F. LtmF, ltmK, ltmE and ltmJ appear to be unique to the epichloe endophytes. The prenyltransferase ltmF is involved in the 27-hydroxyl-O-prenylation. The cytochrome P450 monooxygenase ltmK is required for the oxidative acetal ring formation. The multi-functional prenyltransferase ltmE is required for C20- and C21-prenylations of the indole ring of paspalanes and acts together with the cytochrome P450 monooxygenase ltmJ to yield lolitremanes by multiple oxidations and ring closures. The stereoisomer pairs of lolitriol and lolitrem N or lolitrem B and lolitrem F may be attributed to variations in the way in which ring closure can occur under the action of ltmJ. While the major product of this pathway is lolitrem B, the prenyl transferases and cytochrome P450 monooxygenases identified in this pathway have a remarkable versatility in their regio- and stereo-specificities to generate a diverse range of metabolites that are products of a metabolic grid rather than a linear pathway. In Epichloe festucae var. lolii (Neotyphodium lolii), this protein is FAD-dependent monooxygenase ltmM (ltmM).